A 587-amino-acid chain; its full sequence is Kelch-like protein 3 (587 aa).

The residue at position 10 (Ser-10) is a Phosphoserine. Positions 50 to 117 (CDVMIVAEDV…IYTAEIEVTE (68 aa)) constitute a BTB domain. Positions 152–254 (CLGIRAFADV…PRDYLVQTVE (103 aa)) constitute a BACK domain. A Phosphothreonine modification is found at Thr-295. Kelch repeat units lie at residues 302–347 (VMIV…FMAG), 348–394 (HVYA…VLND), 396–441 (LYAV…VVEG), 442–490 (KLYA…VLSG), 491–537 (QLYA…AVNG), and 539–585 (LYVV…VIHK). At Thr-375 the chain carries Phosphothreonine. Position 376 is a phosphoserine (Ser-376). Ser-433 is modified (phosphoserine; by PKA and PKC).

It belongs to the KLHL3 family. In terms of assembly, homodimer. Component of the BCR(KLHL3) E3 ubiquitin ligase complex, at least composed of CUL3 and KLHL3 and RBX1. Interacts with CLDN8. Phosphorylation at Ser-433 by PKA or PKC decreases the interaction with WNK1 and WNK4, leading to inhibit their degradation by the BCR(KLHL3) complex. Phosphorylated at Ser-433 by PKC in response to angiotensin II signaling, decreasing ability to promote degradation of WNK1 and WNK4, leading to activation of Na-Cl cotransporter SLC12A3/NCC. Phosphorylation at Ser-433 is increased by insulin. Dephosphorylated at Ser-433 by calcineurin PPP3CA, promoting degradation of WNK1 and WNK4. Widely expressed.

The protein localises to the cytoplasm. Its subcellular location is the cytosol. It is found in the cytoskeleton. The protein operates within protein modification; protein ubiquitination. In terms of biological role, substrate-specific adapter of a BCR (BTB-CUL3-RBX1) E3 ubiquitin ligase complex that acts as a regulator of ion transport in the distal nephron. The BCR(KLHL3) complex acts by mediating ubiquitination and degradation of WNK1 and WNK4, two activators of Na-Cl cotransporter SLC12A3/NCC in distal convoluted tubule cells of kidney, thereby regulating NaCl reabsorption. The BCR(KLHL3) complex also mediates ubiquitination and degradation of WNK3. The BCR(KLHL3) complex also mediates ubiquitination of CLDN8, a tight-junction protein required for paracellular chloride transport in the kidney, leading to its degradation. In Homo sapiens (Human), this protein is Kelch-like protein 3.